A 781-amino-acid chain; its full sequence is DNA translocase FtsK 2 (781 aa).

Helical transmembrane passes span 24 to 44 (LLGE…LTIL), 74 to 94 (FADV…LLLL), 120 to 140 (AGVT…LEAI), and 170 to 190 (GFTG…SLFF). Residues 191–781 (HFSWLNLAEQ…NRNGNVVEEE (591 aa)) are Cytoplasmic-facing. A FtsK domain is found at 414–623 (GKPVVADLAK…FQVSSKIDSR (210 aa)). An ATP-binding site is contributed by 434-439 (GSGKSV).

The protein belongs to the FtsK/SpoIIIE/SftA family. Homohexamer. Forms a ring that surrounds DNA.

The protein resides in the cell inner membrane. Functionally, essential cell division protein that coordinates cell division and chromosome segregation. The N-terminus is involved in assembly of the cell-division machinery. The C-terminus functions as a DNA motor that moves dsDNA in an ATP-dependent manner towards the dif recombination site, which is located within the replication terminus region. Translocation stops specifically at Xer-dif sites, where FtsK interacts with the Xer recombinase, allowing activation of chromosome unlinking by recombination. FtsK orienting polar sequences (KOPS) guide the direction of DNA translocation. FtsK can remove proteins from DNA as it translocates, but translocation stops specifically at XerCD-dif site, thereby preventing removal of XerC and XerD from dif. The sequence is that of DNA translocase FtsK 2 (ftsK2) from Ralstonia nicotianae (strain ATCC BAA-1114 / GMI1000) (Ralstonia solanacearum).